We begin with the raw amino-acid sequence, 151 residues long: Deoxyuridine 5'-triphosphate nucleotidohydrolase (151 aa).

Substrate is bound by residues 70-72 (RSG), Asn-83, 87-89 (LID), and Met-97.

The protein belongs to the dUTPase family. In terms of assembly, homotrimer. Mg(2+) is required as a cofactor.

The catalysed reaction is dUTP + H2O = dUMP + diphosphate + H(+). It functions in the pathway pyrimidine metabolism; dUMP biosynthesis; dUMP from dCTP (dUTP route): step 2/2. Functionally, this enzyme is involved in nucleotide metabolism: it produces dUMP, the immediate precursor of thymidine nucleotides and it decreases the intracellular concentration of dUTP so that uracil cannot be incorporated into DNA. This Escherichia fergusonii (strain ATCC 35469 / DSM 13698 / CCUG 18766 / IAM 14443 / JCM 21226 / LMG 7866 / NBRC 102419 / NCTC 12128 / CDC 0568-73) protein is Deoxyuridine 5'-triphosphate nucleotidohydrolase.